The primary structure comprises 343 residues: Labda-7,13(16),14-triene synthase (343 aa).

The Mg(2+) site is built by D114 and E119. Positions 114–119 (DDVHVE) match the DDXXXE motif motif. R206 serves as a coordination point for substrate. The Mg(2+) site is built by N252, S256, and E260. The NXXXSXXXE motif signature appears at 252-260 (NDLYSFAYE).

It belongs to the terpene synthase family. It depends on Mg(2+) as a cofactor.

It carries out the reaction (13E)-labda-7,13-dien-15-yl diphosphate = labda-7,13(16),14-triene + diphosphate. Functionally, involved in the biosynthesis of the labdane-type bicyclic diterpene labda-7,13(16),14-triene. Catalyzes the conversion of labda-7,13(E)-dienyl diphosphate to yield labda-7,13(16),14-triene. In Streptomyces clavuligerus, this protein is Labda-7,13(16),14-triene synthase.